The primary structure comprises 637 residues: DNA gyrase subunit B (637 aa).

The Toprim domain occupies 420–534; the sequence is CEIYIVEGDS…EGHVFIAQPP (115 aa). Residues E426, D499, and D501 each coordinate Mg(2+).

Belongs to the type II topoisomerase GyrB family. Heterotetramer, composed of two GyrA and two GyrB chains. In the heterotetramer, GyrA contains the active site tyrosine that forms a transient covalent intermediate with DNA, while GyrB binds cofactors and catalyzes ATP hydrolysis. It depends on Mg(2+) as a cofactor. Requires Mn(2+) as cofactor. Ca(2+) serves as cofactor.

Its subcellular location is the cytoplasm. It carries out the reaction ATP-dependent breakage, passage and rejoining of double-stranded DNA.. Its function is as follows. A type II topoisomerase that negatively supercoils closed circular double-stranded (ds) DNA in an ATP-dependent manner to modulate DNA topology and maintain chromosomes in an underwound state. Negative supercoiling favors strand separation, and DNA replication, transcription, recombination and repair, all of which involve strand separation. Also able to catalyze the interconversion of other topological isomers of dsDNA rings, including catenanes and knotted rings. Type II topoisomerases break and join 2 DNA strands simultaneously in an ATP-dependent manner. The protein is DNA gyrase subunit B of Clostridium acetobutylicum (strain ATCC 824 / DSM 792 / JCM 1419 / IAM 19013 / LMG 5710 / NBRC 13948 / NRRL B-527 / VKM B-1787 / 2291 / W).